The sequence spans 122 residues: Large ribosomal subunit protein uL14 (122 aa).

The protein belongs to the universal ribosomal protein uL14 family. Part of the 50S ribosomal subunit. Forms a cluster with proteins L3 and L19. In the 70S ribosome, L14 and L19 interact and together make contacts with the 16S rRNA in bridges B5 and B8.

Binds to 23S rRNA. Forms part of two intersubunit bridges in the 70S ribosome. The polypeptide is Large ribosomal subunit protein uL14 (Bradyrhizobium sp. (strain BTAi1 / ATCC BAA-1182)).